The sequence spans 236 residues: Aspartate/glutamate leucyltransferase (236 aa).

It belongs to the R-transferase family. Bpt subfamily.

Its subcellular location is the cytoplasm. The catalysed reaction is N-terminal L-glutamyl-[protein] + L-leucyl-tRNA(Leu) = N-terminal L-leucyl-L-glutamyl-[protein] + tRNA(Leu) + H(+). It catalyses the reaction N-terminal L-aspartyl-[protein] + L-leucyl-tRNA(Leu) = N-terminal L-leucyl-L-aspartyl-[protein] + tRNA(Leu) + H(+). In terms of biological role, functions in the N-end rule pathway of protein degradation where it conjugates Leu from its aminoacyl-tRNA to the N-termini of proteins containing an N-terminal aspartate or glutamate. In Halorhodospira halophila (strain DSM 244 / SL1) (Ectothiorhodospira halophila (strain DSM 244 / SL1)), this protein is Aspartate/glutamate leucyltransferase.